Consider the following 111-residue polypeptide: Succinate dehydrogenase assembly factor 1B, mitochondrial (111 aa).

Belongs to the complex I LYR family. SDHAF1 subfamily. In terms of assembly, interacts with the iron-sulfur protein subunit within the SDH catalytic dimer.

The protein localises to the mitochondrion matrix. In terms of biological role, plays an essential role in the assembly of succinate dehydrogenase (SDH), an enzyme complex (also referred to as respiratory complex II) that is a component of both the tricarboxylic acid (TCA) cycle and the mitochondrial electron transport chain, and which couples the oxidation of succinate to fumarate with the reduction of ubiquinone (coenzyme Q) to ubiquinol. Promotes maturation of the iron-sulfur protein subunit of the SDH catalytic dimer, protecting it from the deleterious effects of oxidants. May act together with SDHAF3. This is Succinate dehydrogenase assembly factor 1B, mitochondrial from Dictyostelium discoideum (Social amoeba).